The primary structure comprises 506 residues: 2-isopropylmalate synthase (506 aa).

Positions 4-266 (ILFMDTTLRD…QSSIILKEIK (263 aa)) constitute a Pyruvate carboxyltransferase domain. Mn(2+) contacts are provided by Asp-13, His-201, His-203, and Asn-237. A regulatory domain region spans residues 390-506 (NIKQLQVHFV…KLKALLTLVK (117 aa)).

It belongs to the alpha-IPM synthase/homocitrate synthase family. LeuA type 1 subfamily. In terms of assembly, homodimer. Requires Mn(2+) as cofactor.

Its subcellular location is the cytoplasm. The enzyme catalyses 3-methyl-2-oxobutanoate + acetyl-CoA + H2O = (2S)-2-isopropylmalate + CoA + H(+). Its pathway is amino-acid biosynthesis; L-leucine biosynthesis; L-leucine from 3-methyl-2-oxobutanoate: step 1/4. Functionally, catalyzes the condensation of the acetyl group of acetyl-CoA with 3-methyl-2-oxobutanoate (2-ketoisovalerate) to form 3-carboxy-3-hydroxy-4-methylpentanoate (2-isopropylmalate). The chain is 2-isopropylmalate synthase from Bacillus cytotoxicus (strain DSM 22905 / CIP 110041 / 391-98 / NVH 391-98).